The sequence spans 449 residues: Tubulin alpha-2 chain (449 aa).

GTP is bound at residue Gln-11. N6-acetyllysine is present on Lys-40. 7 residues coordinate GTP: Glu-71, Ser-140, Gly-144, Thr-145, Thr-179, Asn-206, and Asn-228. Residue Glu-71 participates in Mg(2+) binding. The active site involves Glu-254.

Belongs to the tubulin family. In terms of assembly, dimer of alpha and beta chains. A typical microtubule is a hollow water-filled tube with an outer diameter of 25 nm and an inner diameter of 15 nM. Alpha-beta heterodimers associate head-to-tail to form protofilaments running lengthwise along the microtubule wall with the beta-tubulin subunit facing the microtubule plus end conferring a structural polarity. Microtubules usually have 13 protofilaments but different protofilament numbers can be found in some organisms and specialized cells. Mg(2+) is required as a cofactor. Post-translationally, undergoes a tyrosination/detyrosination cycle, the cyclic removal and re-addition of a C-terminal tyrosine residue by the enzymes tubulin tyrosine carboxypeptidase (TTCP) and tubulin tyrosine ligase (TTL), respectively. In terms of processing, acetylation of alpha chains at Lys-40 stabilizes microtubules and affects affinity and processivity of microtubule motors. This modification has a role in multiple cellular functions, ranging from cell motility, cell cycle progression or cell differentiation to intracellular trafficking and signaling. During the early stages of oogenesis lky/Alpha-tubulin N-acetyltransferase 2 is the main acetyltransferase responsible for Lys-40 acetylation in germline cells while Atat/alpha-tubulin N-acetyltransferase 1 is the main acetyltransferase responsible for Lys-40 acetylation in somatic cells.

Its subcellular location is the cytoplasm. It is found in the cytoskeleton. It catalyses the reaction GTP + H2O = GDP + phosphate + H(+). In terms of biological role, tubulin is the major constituent of microtubules, a cylinder consisting of laterally associated linear protofilaments composed of alpha- and beta-tubulin heterodimers. Microtubules grow by the addition of GTP-tubulin dimers to the microtubule end, where a stabilizing cap forms. Below the cap, tubulin dimers are in GDP-bound state, owing to GTPase activity of alpha-tubulin. In Drosophila melanogaster (Fruit fly), this protein is Tubulin alpha-2 chain (alphaTub85E).